A 206-amino-acid chain; its full sequence is Max dimerization protein 3 (206 aa).

The interaction with SIN3A and SIN3B stretch occupies residues 8–25 (IQVLLQAAEFLERREREA). One can recognise a bHLH domain in the interval 57 to 109 (SGRHVHNELEKRRRAQLKRCLEQLRQQMPLGVDHTRYTTLSLLRGARMHIQKL).

As to quaternary structure, efficient DNA binding requires dimerization with another bHLH protein. Binds DNA as a heterodimer with MAX. Interacts with SIN3A AND SIN3B. Interacts with RNF17.

The protein localises to the nucleus. In terms of biological role, transcriptional repressor. Binds with MAX to form a sequence-specific DNA-binding protein complex which recognizes the core sequence 5'-CAC[GA]TG-3'. Antagonizes MYC transcriptional activity by competing for MAX and suppresses MYC dependent cell transformation. The polypeptide is Max dimerization protein 3 (Mxd3) (Rattus norvegicus (Rat)).